A 134-amino-acid chain; its full sequence is Putative pre-16S rRNA nuclease (134 aa).

It belongs to the YqgF nuclease family.

The protein resides in the cytoplasm. Could be a nuclease involved in processing of the 5'-end of pre-16S rRNA. The protein is Putative pre-16S rRNA nuclease of Helicobacter pylori (strain Shi470).